Reading from the N-terminus, the 266-residue chain is Putative deoxyribonuclease tatdn3 (266 aa).

Residues His9, His11, Glu103, His143, His166, and Asp214 each coordinate Zn(2+).

This sequence belongs to the metallo-dependent hydrolases superfamily. TatD-type hydrolase family. Mn(2+) serves as cofactor. The cofactor is Ca(2+). Mg(2+) is required as a cofactor. It depends on Zn(2+) as a cofactor.

It is found in the nucleus. The 3'-exonuclease activity is sensitive to the metal ion present in the active site, whereas the AP endodeoxyribonuclease activity is observed in a variety of divalent metal cofactors. 3'-exoxonuclease activity is suppressed in the presence of Ca(2+), Zn(2+) and Ni(2+). Functionally, exhibits 3'-exonuclease activities and apurinic/apyrimidinic (AP) endonuclease (in vitro). Show preferential AP endonuclease activity on double-stranded DNA substrates and 3'- exonuclease activity on single-stranded DNA. The polypeptide is Putative deoxyribonuclease tatdn3 (tatdn3) (Danio rerio (Zebrafish)).